The chain runs to 349 residues: MSKKKLSKGQQRRVSANHQRRLKHADSKVEWDDSQLSEPQEGVIISRFGMHADVEAPDGKLHRCNIRRTIHSLVTGDRVVWRAGNETLAGISGIVEAVHPRQSVLTRPDYYDGLKPIAANIDQIVIVSAILPELSLNIIDRYLVACETLEIEPLIVLNKIDLLDDEGRAFVEEVMDIYRALHYRVLMMSSHTQQGVAELEAALTGRVSIFAGQSGVGKSSLLNALLYPDDAQILVNDVSDASGLGQHTTTAARLYHFPHGGDVIDSPGVREFGLWHLEPEQVTRGFIEFRDYLGSCKFRDCKHDTDPGCAIRAALERGEIAPERFDNYHRILESMAQVKTRKSFSAPDN.

A compositionally biased stretch (basic residues) spans 1 to 11; that stretch reads MSKKKLSKGQQ. Positions 1–35 are disordered; the sequence is MSKKKLSKGQQRRVSANHQRRLKHADSKVEWDDSQ. Positions 111-272 constitute a CP-type G domain; sequence YDGLKPIAAN…VIDSPGVREF (162 aa). GTP is bound by residues 158-161 and 212-220; these read NKID and GQSGVGKSS. Zn(2+)-binding residues include Cys296, Cys301, His303, and Cys309.

Belongs to the TRAFAC class YlqF/YawG GTPase family. RsgA subfamily. As to quaternary structure, monomer. Associates with 30S ribosomal subunit, binds 16S rRNA. Zn(2+) is required as a cofactor.

The protein resides in the cytoplasm. In terms of biological role, one of several proteins that assist in the late maturation steps of the functional core of the 30S ribosomal subunit. Helps release RbfA from mature subunits. May play a role in the assembly of ribosomal proteins into the subunit. Circularly permuted GTPase that catalyzes slow GTP hydrolysis, GTPase activity is stimulated by the 30S ribosomal subunit. This is Small ribosomal subunit biogenesis GTPase RsgA from Dickeya dadantii (strain 3937) (Erwinia chrysanthemi (strain 3937)).